The sequence spans 221 residues: 2-phospho-L-lactate guanylyltransferase (221 aa).

Belongs to the CofC family. As to quaternary structure, homodimer.

It catalyses the reaction (2S)-2-phospholactate + GTP + H(+) = (2S)-lactyl-2-diphospho-5'-guanosine + diphosphate. It functions in the pathway cofactor biosynthesis; coenzyme F420 biosynthesis. Its function is as follows. Guanylyltransferase that catalyzes the activation of (2S)-2-phospholactate (2-PL) as (2S)-lactyl-2-diphospho-5'-guanosine, via the condensation of 2-PL with GTP. It is involved in the biosynthesis of coenzyme F420, a hydride carrier cofactor. The protein is 2-phospho-L-lactate guanylyltransferase of Methanothrix thermoacetophila (strain DSM 6194 / JCM 14653 / NBRC 101360 / PT) (Methanosaeta thermophila).